Reading from the N-terminus, the 445-residue chain is Phosphoglucosamine mutase (445 aa).

Ser-104 serves as the catalytic Phosphoserine intermediate. Ser-104, Asp-243, Asp-245, and Asp-247 together coordinate Mg(2+). At Ser-104 the chain carries Phosphoserine.

This sequence belongs to the phosphohexose mutase family. Mg(2+) is required as a cofactor. Post-translationally, activated by phosphorylation.

It carries out the reaction alpha-D-glucosamine 1-phosphate = D-glucosamine 6-phosphate. Catalyzes the conversion of glucosamine-6-phosphate to glucosamine-1-phosphate. In Neisseria subflava, this protein is Phosphoglucosamine mutase.